Consider the following 83-residue polypeptide: Exodeoxyribonuclease 7 small subunit (83 aa).

It belongs to the XseB family. In terms of assembly, heterooligomer composed of large and small subunits.

Its subcellular location is the cytoplasm. It carries out the reaction Exonucleolytic cleavage in either 5'- to 3'- or 3'- to 5'-direction to yield nucleoside 5'-phosphates.. Its function is as follows. Bidirectionally degrades single-stranded DNA into large acid-insoluble oligonucleotides, which are then degraded further into small acid-soluble oligonucleotides. In Bradyrhizobium sp. (strain ORS 278), this protein is Exodeoxyribonuclease 7 small subunit.